The following is an 872-amino-acid chain: MKTMTSAEVRQMFLDFFKSKGHTVEPSQSLVPVNDPTLLWINSGVATLKKYFDGSVVPENPRLTNAQKAIRTNDIENVGKTARHHTMFEMLGNFSIGDYFRKEAIAFAWELLTSSEWFEFPAEKLYITYYPADKDTYNRWVEVGVDPTHLVPIEDNFWEIGAGPSGPDTEIFFDRGEVYDPEHVGLKLLAEDIENDRYIEIWNIVLSQFNADPSIPRSEYPELPQKNIDTGMGLERMVCIIQGGKTNFDTDLFLPIIREIEKLSGKTYSPDSENMSFKVIADHIRSLSFAIGDGALPGNEGRGYVLRRLLRRAVMHGKKLGIQGKFLASLVPTVGKIMQSYYPEVLEKEDFIMQIIDREEETFNRTIDAGQKLIDELLLNLKSEGKDRLEGADIFRLYDTYGFPVELTEELAEDEGFKIDHEGFKVAMKAQQERARAAVVKGGSMGAQNETLSSIEVESEFLYEDKTTQGKLLVSIQDDEIVDEVSGKAQLVFDVTPFYAEMGGQVADHGVIKDAEGQVVANVLDVQHAPHGQNLHSVETLSPLKVGESYTLEIDKERRAAVVKNHTATHLLHAALHNIVGNHALQAGSLNEVEFLRFDFTHFAQVTKEELAEIERQVNEVIWQSLKVETVETDIATAKEMGAMALFGEKYGKNVRVVKIGDYSIELCGGTHTQTTSEIGLFKIVKEEGIGSGVRRIIAVTGQKAYEAFKDAENTLNEVATMVKAPQTSQVLAKVTSLQDELKTAQKENDALAGKLAASQSDEIFKNVQTAGSLNFIASEVTVPDANGLRNLADIWKQKELSDVLVLVAKIGEKVSLLVASKSSDVKAGNLVKELAPFVDGRGGGKPDMAMAGGSKAAGIPELLAAVAEKLA.

Zn(2+) contacts are provided by His566, His570, Cys668, and His672.

Belongs to the class-II aminoacyl-tRNA synthetase family. Zn(2+) is required as a cofactor.

Its subcellular location is the cytoplasm. It carries out the reaction tRNA(Ala) + L-alanine + ATP = L-alanyl-tRNA(Ala) + AMP + diphosphate. Catalyzes the attachment of alanine to tRNA(Ala) in a two-step reaction: alanine is first activated by ATP to form Ala-AMP and then transferred to the acceptor end of tRNA(Ala). Also edits incorrectly charged Ser-tRNA(Ala) and Gly-tRNA(Ala) via its editing domain. The chain is Alanine--tRNA ligase from Lactococcus lactis subsp. lactis (strain IL1403) (Streptococcus lactis).